We begin with the raw amino-acid sequence, 493 residues long: Sulfoacetaldehyde dehydrogenase (acylating) (493 aa).

Over residues 1-10 the composition is skewed to basic residues; sequence MSVQILHRRQ. The segment at 1–21 is disordered; that stretch reads MSVQILHRRQSNNSDLPLPTA. Cys-273 functions as the Nucleophile in the catalytic mechanism.

The protein belongs to the aldehyde dehydrogenase family. Homodimer.

It is found in the cytoplasm. The catalysed reaction is sulfoacetaldehyde + NADP(+) + CoA = sulfoacetyl-CoA + NADPH + H(+). Functionally, involved in the degradation of sulfoacetate, a widespread natural product. Catalyzes the conversion of sulfoacetyl-CoA and NADPH to sulfoacetaldehyde, CoA and NADP(+). Specific for NADP(+) and sulfoacetaldehyde. In Cupriavidus necator (strain ATCC 17699 / DSM 428 / KCTC 22496 / NCIMB 10442 / H16 / Stanier 337) (Ralstonia eutropha), this protein is Sulfoacetaldehyde dehydrogenase (acylating).